Consider the following 388-residue polypeptide: GTPase Obg (388 aa).

The Obg domain occupies 1 to 159 (MKFVDEAVIK…RELRLELLLL (159 aa)). Positions 160 to 333 (ADVGMLGLPN…LCYKLADFME (174 aa)) constitute an OBG-type G domain. GTP is bound by residues 166–173 (GLPNAGKS), 191–195 (FTTLI), 213–216 (DIPG), 283–286 (NKVD), and 314–316 (SAV). Serine 173 and threonine 193 together coordinate Mg(2+). Positions 359–380 (NQGEVITEDDDDWDDWDDEEDD) are disordered. Acidic residues predominate over residues 364–380 (ITEDDDDWDDWDDEEDD).

It belongs to the TRAFAC class OBG-HflX-like GTPase superfamily. OBG GTPase family. In terms of assembly, monomer. The cofactor is Mg(2+).

It is found in the cytoplasm. Its function is as follows. An essential GTPase which binds GTP, GDP and possibly (p)ppGpp with moderate affinity, with high nucleotide exchange rates and a fairly low GTP hydrolysis rate. Plays a role in control of the cell cycle, stress response, ribosome biogenesis and in those bacteria that undergo differentiation, in morphogenesis control. In Vibrio vulnificus (strain YJ016), this protein is GTPase Obg.